Consider the following 79-residue polypeptide: Conotoxin Tr6.3 (79 aa).

The N-terminal stretch at 1–22 (MKLTCVLIISVLFLTASQLITA) is a signal peptide. The propeptide occupies 23–47 (VYSRDKQQYRAARLRDEMRNLKGAR). 3 disulfide bridges follow: Cys-49–Cys-62, Cys-56–Cys-67, and Cys-61–Cys-77. 4-hydroxyproline is present on residues Pro-60 and Pro-63.

The protein belongs to the conotoxin O1 superfamily. As to expression, expressed by the venom duct.

The protein localises to the secreted. Its function is as follows. Ion channel inhibitor that inhibits the increase in intracellular calcium upon depolarization in DRG neurons. In vivo, both intraperitoneal and intracranial injections into mice induce hyperactivity. This Conus terebra (Sea snail) protein is Conotoxin Tr6.3.